A 634-amino-acid polypeptide reads, in one-letter code: MGKVVGIDLGTTNSCVAVMEGGKPTVIANAEGFRTTPSVVAYTKNQDQLVGQIAKRQAVMNPENTFYSAKRFVGRRVDEVNEESKEVSYGIEKAGSNVKLKCPVLDKQFSPEEVSAQVLRKLSEDAGKYLGENITQAVITVPAYFNDSQRQATKDAGKIAGLEVLRIINEPTAAALAYGLDKKSNERILVFDLGGGTFDVSVLEVGDGVFEVLSTSGDTHLGGDDFDRCIVDHLASIFKSNEGIDLRQDKQALQRLTEAAEKAKIELSNATQSEINLPFITATPEGPKHLDLNLTRANFEELASKLIDRCRVPVEQALKDAKLSTGEIDEIVMVGGSTRMPAVQELVKRVTGKDPNQTVNPDEVVAVGAAIQGGVLAGEVKDILLLDVTPLSLGVETLGGVMTKMITRNTTVPTKKSETYSTAVDGQTNVEIHVLQGEREMASDNKSLGTFRLDGIPSAPRGVPQIEVTFDIDANGILSVTAKDKGSGKEQSISITGASTLSDNEVDKMVKDAESNASVDKEKREKIDLKNQAETLVYQTEKQLGELGDKVDASAKAKVEEKSKALKEATSKEDYEAMKKLLEELQQELYAIGSSVYQQPGNQPPAPGTPDSNESNDKGGDDDVIDADFTETKD.

The residue at position 197 (T197) is a Phosphothreonine; by autocatalysis. A disordered region spans residues I592–D634. A compositionally biased stretch (acidic residues) spans D622–D634.

This sequence belongs to the heat shock protein 70 family.

Functionally, acts as a chaperone. This is Chaperone protein dnaK2 (dnaK2) from Prochlorococcus marinus subsp. pastoris (strain CCMP1986 / NIES-2087 / MED4).